We begin with the raw amino-acid sequence, 229 residues long: Potassium/proton antiporter CemA (229 aa).

4 consecutive transmembrane segments (helical) span residues phenylalanine 7 to phenylalanine 27, isoleucine 114 to leucine 134, isoleucine 154 to isoleucine 174, and isoleucine 189 to isoleucine 209.

The protein belongs to the CemA family.

The protein resides in the plastid. Its subcellular location is the chloroplast inner membrane. It catalyses the reaction K(+)(in) + H(+)(out) = K(+)(out) + H(+)(in). Contributes to K(+)/H(+) antiport activity by supporting proton efflux to control proton extrusion and homeostasis in chloroplasts in a light-dependent manner to modulate photosynthesis. Prevents excessive induction of non-photochemical quenching (NPQ) under continuous-light conditions. Indirectly promotes efficient inorganic carbon uptake into chloroplasts. This is Potassium/proton antiporter CemA from Acorus calamus var. americanus (American sweet flag).